The primary structure comprises 472 residues: 2-oxoglutarate carboxylase small subunit (472 aa).

Residues 1 to 445 enclose the Biotin carboxylation domain; the sequence is MFKKVLVANR…TTRYLEEHPH (445 aa). 2 residues coordinate ATP: Lys115 and Glu199. Positions 119–316 constitute an ATP-grasp domain; the sequence is KEVMKRAGVP…IVKWQIRIAA (198 aa). Arg291 is an active-site residue.

As to quaternary structure, heterohexadecamer of 8 large subunits and 8 small subunits. Mg(2+) is required as a cofactor. Mn(2+) serves as cofactor. Requires Co(2+) as cofactor.

It carries out the reaction hydrogencarbonate + 2-oxoglutarate + ATP = (S)-oxalosuccinate + ADP + phosphate + H(+). In Hydrogenobacter thermophilus (strain DSM 6534 / IAM 12695 / TK-6), this protein is 2-oxoglutarate carboxylase small subunit.